A 140-amino-acid polypeptide reads, in one-letter code: Endoribonuclease YbeY (140 aa).

The Zn(2+) site is built by histidine 100, histidine 104, and histidine 110.

This sequence belongs to the endoribonuclease YbeY family. Zn(2+) serves as cofactor.

Its subcellular location is the cytoplasm. Its function is as follows. Single strand-specific metallo-endoribonuclease involved in late-stage 70S ribosome quality control and in maturation of the 3' terminus of the 16S rRNA. The sequence is that of Endoribonuclease YbeY from Helicobacter pylori (strain P12).